We begin with the raw amino-acid sequence, 1172 residues long: Pesticidal crystal protein Cry1Ha (1172 aa).

Belongs to the delta endotoxin family.

Its function is as follows. Promotes colloidosmotic lysis by binding to the midgut epithelial cells of insects. This is Pesticidal crystal protein Cry1Ha (cry1Ha) from Bacillus thuringiensis.